We begin with the raw amino-acid sequence, 182 residues long: Probable RNA 2'-phosphotransferase (182 aa).

This sequence belongs to the KptA/TPT1 family.

Its function is as follows. Removes the 2'-phosphate from RNA via an intermediate in which the phosphate is ADP-ribosylated by NAD followed by a presumed transesterification to release the RNA and generate ADP-ribose 1''-2''-cyclic phosphate (APPR&gt;P). May function as an ADP-ribosylase. This chain is Probable RNA 2'-phosphotransferase, found in Pseudomonas paraeruginosa (strain DSM 24068 / PA7) (Pseudomonas aeruginosa (strain PA7)).